Here is a 305-residue protein sequence, read N- to C-terminus: D-alanine--D-alanine ligase (305 aa).

The ATP-grasp domain occupies 105–300 (KMIWQAAGIN…FDELVVQILE (196 aa)). Residue 131 to 186 (ADRLGLPLIIKPAREGSTLGLNKVDNEQDFRSAYQAAAEYDSLVLAEQFIQGIELT) coordinates ATP. 3 residues coordinate Mg(2+): Asp254, Glu267, and Asn269.

Belongs to the D-alanine--D-alanine ligase family. Mg(2+) is required as a cofactor. Requires Mn(2+) as cofactor.

It localises to the cytoplasm. It carries out the reaction 2 D-alanine + ATP = D-alanyl-D-alanine + ADP + phosphate + H(+). Its pathway is cell wall biogenesis; peptidoglycan biosynthesis. Cell wall formation. This Nitrosomonas europaea (strain ATCC 19718 / CIP 103999 / KCTC 2705 / NBRC 14298) protein is D-alanine--D-alanine ligase.